The chain runs to 161 residues: Ribosome maturation factor RimP (161 aa).

This sequence belongs to the RimP family.

Its subcellular location is the cytoplasm. Functionally, required for maturation of 30S ribosomal subunits. The sequence is that of Ribosome maturation factor RimP from Rickettsia massiliae (strain Mtu5).